A 255-amino-acid polypeptide reads, in one-letter code: Hydroxylmethylpyrimidine kinase (255 aa).

The pyridoxal 5'-phosphate site is built by G18, Q43, and N110. Residue Q43 participates in 4-amino-5-hydroxymethyl-2-methylpyrimidine binding. A disulfide bridge connects residues C195 and C207. S208 provides a ligand contact to pyridoxal 5'-phosphate.

This sequence belongs to the ThiD family. Homodimer. Crystals show a disulfide bond between Cys-195 and Cys-207. This disulfide is possibly an artifact of the purification and crystallization conditions. However, as it is adjacent to the conserved GSGC of the oxyanion hole, this disulfide may help to orient the backbone amides toward the oxanion intermediate.

The enzyme catalyses 4-amino-5-hydroxymethyl-2-methylpyrimidine + ATP = 4-amino-2-methyl-5-(phosphooxymethyl)pyrimidine + ADP + H(+). The protein operates within cofactor biosynthesis; thiamine diphosphate biosynthesis. With respect to regulation, inhibited by pyridoxal phosphate at high micromolar concentrations. In terms of biological role, catalyzes the phosphorylation of hydroxymethylpyrimidine (HMP) to hydroxymethylpyrimidine phosphate (HMP-P). Unlike other HMPKs, it cannot catalyze the phosphorylation of HMP-P to generate the diphosphate HMP-PP. Shows no activity with pyridoxal, pyridoxamine or pyridoxine. Does not show phosphatase activity. This chain is Hydroxylmethylpyrimidine kinase, found in Acinetobacter baumannii (strain IS-123).